Here is a 274-residue protein sequence, read N- to C-terminus: Large ribosomal subunit protein uL2 (274 aa).

Residues 225 to 274 (MNPVDHPHGGGEGRSPIGRHPVTPWGKPTLGVKTRKKNKASSKLIIKRRK) form a disordered region. The span at 257 to 274 (KTRKKNKASSKLIIKRRK) shows a compositional bias: basic residues.

Belongs to the universal ribosomal protein uL2 family. As to quaternary structure, part of the 50S ribosomal subunit. Forms a bridge to the 30S subunit in the 70S ribosome.

In terms of biological role, one of the primary rRNA binding proteins. Required for association of the 30S and 50S subunits to form the 70S ribosome, for tRNA binding and peptide bond formation. It has been suggested to have peptidyltransferase activity; this is somewhat controversial. Makes several contacts with the 16S rRNA in the 70S ribosome. The chain is Large ribosomal subunit protein uL2 from Carboxydothermus hydrogenoformans (strain ATCC BAA-161 / DSM 6008 / Z-2901).